The chain runs to 289 residues: Syntaxin-3 (289 aa).

Residues 1–263 (MKDRLEQLKA…MKYQGQARKK (263 aa)) lie on the Cytoplasmic side of the membrane. The stretch at 32 to 111 (MDEFFSEIEE…IEEDEVRSSA (80 aa)) forms a coiled coil. Residues 191–253 (LSEIEGRHKD…EKARDETKRA (63 aa)) form the t-SNARE coiled-coil homology domain. A helical; Anchor for type IV membrane protein transmembrane segment spans residues 264–284 (LIIIIVIVVVLLGILALIIGL). The Extracellular portion of the chain corresponds to 285-289 (SVGLK).

It belongs to the syntaxin family. In terms of assembly, interacts with REEP6. Interacts with PRPH2 in rod and cone photoreceptors. Interacts with ROM1. Interacts with SNAP25. Interacts with VAMP2. In terms of tissue distribution, heart, spleen, lung and kidney.

It is found in the membrane. Potentially involved in docking of synaptic vesicles at presynaptic active zones. Apical receptor involved in membrane fusion of apical vesicles. Essential for survival of retinal photoreceetors. This Rattus norvegicus (Rat) protein is Syntaxin-3 (Stx3).